The chain runs to 158 residues: Transcription antitermination protein NusB (158 aa).

A compositionally biased stretch (polar residues) spans 1–13; the sequence is MSEAGDTSPQPGK. A disordered region spans residues 1-24; sequence MSEAGDTSPQPGKTGQPKAGDRRR.

It belongs to the NusB family.

In terms of biological role, involved in transcription antitermination. Required for transcription of ribosomal RNA (rRNA) genes. Binds specifically to the boxA antiterminator sequence of the ribosomal RNA (rrn) operons. The sequence is that of Transcription antitermination protein NusB from Marinobacter nauticus (strain ATCC 700491 / DSM 11845 / VT8) (Marinobacter aquaeolei).